The sequence spans 405 residues: Aspartokinase (405 aa).

7 to 10 (KYGG) contributes to the ATP binding site. 25 to 30 (RIAHYR) serves as a coordination point for substrate. Residue Ser41 coordinates ATP. Residues 47-49 (TDE), Glu74, 125-126 (LE), 150-153 (RGGS), and Ser153 contribute to the substrate site. ATP contacts are provided by residues 173–174 (TD), 179–184 (YTTDPH), and Arg209. ACT domains are found at residues 263–342 (IGLI…IAKV) and 344–405 (IVGV…LDKA). Residues Asp270, 288 to 290 (AVD), Gln294, 355 to 356 (VP), 369 to 370 (NI), and 376 to 377 (SE) each bind substrate.

Belongs to the aspartokinase family. Tetramer consisting of 2 isoforms Alpha (catalytic and regulation) and of a homodimer of 2 isoforms Beta (regulation).

It catalyses the reaction L-aspartate + ATP = 4-phospho-L-aspartate + ADP. The protein operates within amino-acid biosynthesis; L-lysine biosynthesis via DAP pathway; (S)-tetrahydrodipicolinate from L-aspartate: step 1/4. It participates in amino-acid biosynthesis; L-methionine biosynthesis via de novo pathway; L-homoserine from L-aspartate: step 1/3. Its pathway is amino-acid biosynthesis; L-threonine biosynthesis; L-threonine from L-aspartate: step 1/5. Catalyzes the phosphorylation of the beta-carboxyl group of aspartic acid with ATP to yield 4-phospho-L-aspartate, which is involved in the branched biosynthetic pathway leading to the biosynthesis of amino acids lysine, threonine, isoleucine and methionine. The chain is Aspartokinase (ask) from Thermus thermophilus (strain ATCC BAA-163 / DSM 7039 / HB27).